The primary structure comprises 301 residues: ATP synthase gamma chain (301 aa).

The protein belongs to the ATPase gamma chain family. F-type ATPases have 2 components, CF(1) - the catalytic core - and CF(0) - the membrane proton channel. CF(1) has five subunits: alpha(3), beta(3), gamma(1), delta(1), epsilon(1). CF(0) has three main subunits: a, b and c.

The protein localises to the cell inner membrane. Functionally, produces ATP from ADP in the presence of a proton gradient across the membrane. The gamma chain is believed to be important in regulating ATPase activity and the flow of protons through the CF(0) complex. This Helicobacter pylori (strain Shi470) protein is ATP synthase gamma chain.